A 1243-amino-acid polypeptide reads, in one-letter code: Interphotoreceptor matrix proteoglycan 2 (1243 aa).

An N-terminal signal peptide occupies residues 1–27 (MIMFLPVGRMSLGILILFLTGGNLVSA). The Extracellular segment spans residues 28 to 1106 (SEERQEPMHA…EFVSEPFVIG (1079 aa)). The interval 205–234 (GLASESSAASPQESISNEIENVTEEPTQPA) is disordered. A compositionally biased stretch (low complexity) spans 207–220 (ASESSAASPQESIS). A compositionally biased stretch (polar residues) spans 221–230 (NEIENVTEEP). N-linked (GlcNAc...) asparagine glycosylation is present at Asn225. Residues 235–349 (AEQIAEFSIQ…KPTAVYTISN (115 aa)) enclose the SEA 1 domain. The tract at residues 255–263 (RDPSSALYR) is hyaluronan-binding motif involved in chondroitin sulfate A-binding. N-linked (GlcNAc...) asparagine glycans are attached at residues Asn297, Asn316, and Asn366. O-linked (GalNAc...) threonine glycans are attached at residues Thr427, Thr428, and Thr429. Asn582 carries N-linked (GlcNAc...) asparagine glycosylation. O-linked (GalNAc...) threonine glycosylation is found at Thr701, Thr704, and Thr712. Basic and acidic residues predominate over residues 748–762 (EDMVHTESSSHKELD). Positions 748–768 (EDMVHTESSSHKELDSEVPVS) are disordered. Thr817 and Thr888 each carry an O-linked (GalNAc...) threonine glycan. Positions 900–1013 (GALVVFFSLR…YSLDVESGDE (114 aa)) constitute an SEA 2 domain. Asn945 and Asn959 each carry an N-linked (GlcNAc...) asparagine glycan. 2 consecutive EGF-like domains span residues 1013 to 1054 (EANP…LPCQ) and 1055 to 1096 (SLCD…QHCE). Disulfide bonds link Cys1017-Cys1028, Cys1022-Cys1039, Cys1041-Cys1053, Cys1057-Cys1070, Cys1064-Cys1080, and Cys1082-Cys1095. Residues 1083-1091 (RVGSNWWYR) form a hyaluronan-binding motif involved in chondroitin sulfate C-binding region. Residues 1107–1127 (ITIASVVSFLLVASAVVFFLV) traverse the membrane as a helical segment. The segment at 1128–1136 (KMLQAQNVR) is hyaluronan-binding motif involved in chondroitin sulfate A- and C-binding. The Cytoplasmic portion of the chain corresponds to 1128–1243 (KMLQAQNVRR…FVREHQMEEL (116 aa)). The hyaluronan-binding motif involved in chondroitin sulfate C-binding stretch occupies residues 1139–1147 (RQRPTSSSR). Positions 1212–1220 (KEEIQERMR) are hyaluronan-binding motif involved in chondroitin sulfate A- and C-binding motif.

As to expression, expressed in the retina (at protein level). Expressed in the pineal gland.

The protein resides in the photoreceptor outer segment membrane. It localises to the photoreceptor inner segment membrane. It is found in the secreted. Its subcellular location is the extracellular space. The protein localises to the extracellular matrix. The protein resides in the interphotoreceptor matrix. In terms of biological role, chondroitin sulfate- and hyaluronan-binding proteoglycan involved in the organization of interphotoreceptor matrix; may participate in the maturation and maintenance of the light-sensitive photoreceptor outer segment. Binds heparin. The chain is Interphotoreceptor matrix proteoglycan 2 (Impg2) from Mus musculus (Mouse).